The primary structure comprises 412 residues: Multifunctional CCA protein (412 aa).

2 residues coordinate ATP: glycine 8 and arginine 11. The CTP site is built by glycine 8 and arginine 11. Mg(2+) contacts are provided by aspartate 21 and aspartate 23. ATP contacts are provided by arginine 91, arginine 137, and arginine 140. Arginine 91, arginine 137, and arginine 140 together coordinate CTP. The HD domain maps to threonine 228–tryptophan 329.

Belongs to the tRNA nucleotidyltransferase/poly(A) polymerase family. Bacterial CCA-adding enzyme type 1 subfamily. In terms of assembly, monomer. Can also form homodimers and oligomers. The cofactor is Mg(2+). It depends on Ni(2+) as a cofactor.

The enzyme catalyses a tRNA precursor + 2 CTP + ATP = a tRNA with a 3' CCA end + 3 diphosphate. The catalysed reaction is a tRNA with a 3' CCA end + 2 CTP + ATP = a tRNA with a 3' CCACCA end + 3 diphosphate. In terms of biological role, catalyzes the addition and repair of the essential 3'-terminal CCA sequence in tRNAs without using a nucleic acid template. Adds these three nucleotides in the order of C, C, and A to the tRNA nucleotide-73, using CTP and ATP as substrates and producing inorganic pyrophosphate. tRNA 3'-terminal CCA addition is required both for tRNA processing and repair. Also involved in tRNA surveillance by mediating tandem CCA addition to generate a CCACCA at the 3' terminus of unstable tRNAs. While stable tRNAs receive only 3'-terminal CCA, unstable tRNAs are marked with CCACCA and rapidly degraded. The chain is Multifunctional CCA protein from Shewanella pealeana (strain ATCC 700345 / ANG-SQ1).